The following is a 506-amino-acid chain: Kynurenine 3-monooxygenase (506 aa).

The interval Q153–D175 is disordered. Residues E162–T171 are compositionally biased toward basic and acidic residues.

It belongs to the aromatic-ring hydroxylase family. KMO subfamily. FAD serves as cofactor.

The protein localises to the mitochondrion outer membrane. The catalysed reaction is L-kynurenine + NADPH + O2 + H(+) = 3-hydroxy-L-kynurenine + NADP(+) + H2O. It participates in cofactor biosynthesis; NAD(+) biosynthesis; quinolinate from L-kynurenine: step 1/3. Functionally, catalyzes the hydroxylation of L-kynurenine (L-Kyn) to form 3-hydroxy-L-kynurenine (L-3OHKyn). Required for synthesis of quinolinic acid. The polypeptide is Kynurenine 3-monooxygenase (Cryptococcus neoformans var. neoformans serotype D (strain B-3501A) (Filobasidiella neoformans)).